A 322-amino-acid polypeptide reads, in one-letter code: Protein mono-ADP-ribosyltransferase PARP16 (322 aa).

Residues Met1–Ser287 are Cytoplasmic-facing. Positions Gly5–Ser91 constitute a PARP alpha-helical domain. Asp37 carries the ADP-ribosyl aspartic acid modification. Glu70 carries the post-translational modification ADP-ribosyl glutamic acid. The region spanning Val94–Ala279 is the PARP catalytic domain. An N6-(ADP-ribosyl)lysine mark is found at Lys110 and Lys137. 3 residues coordinate NAD(+): His152, Tyr182, and Tyr254. Residues Ser288–Ile308 form a helical membrane-spanning segment. Residues Asn309–Arg322 are Lumenal-facing.

The protein belongs to the ARTD/PARP family. In terms of assembly, interacts with KPNB1. Auto-mono-ADP-ribosylated.

The protein resides in the endoplasmic reticulum membrane. It carries out the reaction L-aspartyl-[protein] + NAD(+) = 4-O-(ADP-D-ribosyl)-L-aspartyl-[protein] + nicotinamide. It catalyses the reaction L-glutamyl-[protein] + NAD(+) = 5-O-(ADP-D-ribosyl)-L-glutamyl-[protein] + nicotinamide. The catalysed reaction is L-lysyl-[protein] + NAD(+) = N(6)-(ADP-D-ribosyl)-L-lysyl-[protein] + nicotinamide + H(+). With respect to regulation, in absence of activation signal, PARP16 is autoinhibited by the PARP alpha-helical domain (also named HD region), which prevents effective NAD(+)-binding. Activity is highly stimulated by signals, which unfold the PARP alpha-helical domain, relieving autoinhibition. In terms of biological role, intracellular mono-ADP-ribosyltransferase that plays a role in different processes, such as protein translation and unfolded protein response (UPR), through the mono-ADP-ribosylation of proteins involved in those processes. Acts as an inhibitor of protein translation by catalyzing mono-ADP-ribosylation of ribosomal subunits, such as RPL14 and RPS6, thereby inhibiting polysome assembly and mRNA loading. Mono-ADP-ribosylation of ribosomal subunits is promoted by NMNAT2. Involved in the unfolded protein response (UPR) by ADP-ribosylating and activating EIF2AK3 and ERN1, two important UPR effectors. May also mediate mono-ADP-ribosylation of karyopherin KPNB1 a nuclear import factor. May not modify proteins on arginine or cysteine residues compared to other mono-ADP-ribosyltransferases. The polypeptide is Protein mono-ADP-ribosyltransferase PARP16 (Homo sapiens (Human)).